Reading from the N-terminus, the 785-residue chain is Cation/H(+) antiporter 1 (785 aa).

Transmembrane regions (helical) follow at residues leucine 19–phenylalanine 39, glycine 44–isoleucine 64, tyrosine 79–isoleucine 99, isoleucine 112–phenylalanine 132, phenylalanine 143–isoleucine 163, leucine 179–leucine 199, phenylalanine 201–isoleucine 221, tyrosine 240–isoleucine 260, tyrosine 294–valine 314, leucine 323–alanine 343, glutamine 352–leucine 372, and methionine 389–leucine 409.

This sequence belongs to the monovalent cation:proton antiporter 2 (CPA2) transporter (TC 2.A.37) family. CHX (TC 2.A.37.4) subfamily. Specifically expressed in pollen.

The protein localises to the membrane. Its function is as follows. May operate as a cation/H(+) antiporter. This Arabidopsis thaliana (Mouse-ear cress) protein is Cation/H(+) antiporter 1 (CHX1).